The chain runs to 631 residues: tRNA uridine 5-carboxymethylaminomethyl modification enzyme MnmG (631 aa).

13-18 (GGGHAG) is an FAD binding site. 273–287 (GPRYCPSIEDKVNRF) is an NAD(+) binding site.

This sequence belongs to the MnmG family. In terms of assembly, homodimer. Heterotetramer of two MnmE and two MnmG subunits. FAD is required as a cofactor.

Its subcellular location is the cytoplasm. Its function is as follows. NAD-binding protein involved in the addition of a carboxymethylaminomethyl (cmnm) group at the wobble position (U34) of certain tRNAs, forming tRNA-cmnm(5)s(2)U34. The protein is tRNA uridine 5-carboxymethylaminomethyl modification enzyme MnmG of Chromohalobacter salexigens (strain ATCC BAA-138 / DSM 3043 / CIP 106854 / NCIMB 13768 / 1H11).